Here is a 545-residue protein sequence, read N- to C-terminus: Betaine receptor acr-23 (545 aa).

Residues 1-19 (MHRIYTFLIFISQLALGLS) form the signal peptide. The Extracellular segment spans residues 20–244 (NNPDIPIQYE…DVVIQRKPLY (225 aa)). Residues Asn53 and Asn97 are each glycosylated (N-linked (GlcNAc...) asparagine). Cystine bridges form between Cys157/Cys171 and Cys224/Cys225. Asn228 carries an N-linked (GlcNAc...) asparagine glycan. A helical transmembrane segment spans residues 245–265 (YVLNLIAPTAVITFISIIGFF). A glycan (N-linked (GlcNAc...) asparagine) is linked at Asn276. The next 2 membrane-spanning stretches (helical) occupy residues 287–307 (EKIT…FMVS) and 317–337 (VPLI…GTLA). Topologically, residues 338–512 (ASSVIFVQKL…WDWVAAVLER (175 aa)) are cytoplasmic. Residues 513-533 (VFLIFFTICFLFSAIGINLYG) form a helical membrane-spanning segment.

This sequence belongs to the ligand-gated ion channel (TC 1.A.9) family. Acetylcholine receptor (TC 1.A.9.1) subfamily. Expressed in the body wall muscles that are arranged into four longitudinal bundles, some mechanosensory neurons, the head muscles and multiple interneurons. Not expressed in motor neurons (at protein level).

Its subcellular location is the cell membrane. Its function is as follows. Betaine receptor that functions as a ligand-gated non-selective monovalent cation channel in mechanosensory neurons to maintain basal levels of locomotion. The channel is permeable to Na(+) and K(+) but not to Ba(2+) or Ca(2+) ions. Elicits current in response to betaine, very weak current in response to choline, virtually no current in response to acetylcholine and nicotine, and no current in response to glycine and GABA. This Caenorhabditis elegans protein is Betaine receptor acr-23.